The following is a 274-amino-acid chain: HTH-type transcriptional regulator GadX (274 aa).

The HTH araC/xylS-type domain occupies 145–242; the sequence is TRVCTVINNN…GMTPTEYQER (98 aa). 2 DNA-binding regions (H-T-H motif) span residues 162-183 and 209-232; these read ARIA…REEE and IKRV…RNYY.

Homodimer.

Positively regulates the expression of about fifteen genes involved in acid resistance such as gadA, gadB and gadC. Depending on the conditions (growth phase and medium), can repress gadW. The sequence is that of HTH-type transcriptional regulator GadX (gadX) from Escherichia coli (strain K12).